A 298-amino-acid polypeptide reads, in one-letter code: Probable mitochondrial 2-oxodicarboxylate carrier (298 aa).

The next 6 helical transmembrane spans lie at 6 to 26 (IPFPVTFAAGAVAGISEVLTL), 62 to 81 (HRLYRGILPPILMEAPKRAL), 105 to 125 (ALSILTGSCAGFTETFVVVPF), 159 to 179 (ALYNGFEATMWRHVVWNAGYF), 203 to 223 (LIAGTIGGIFGTFLSTPFDVI), and 267 to 287 (VLRLGPGGGILLVVFNSVIEF). 3 Solcar repeats span residues 6–92 (IPFP…YSKL), 102–188 (SSPA…IRNS), and 197–287 (GEIR…VIEF).

The protein belongs to the mitochondrial carrier (TC 2.A.29) family.

The protein localises to the mitochondrion inner membrane. Transports C5-C7 oxodicarboxylates across the inner membranes of mitochondria. This chain is Probable mitochondrial 2-oxodicarboxylate carrier, found in Schizosaccharomyces pombe (strain 972 / ATCC 24843) (Fission yeast).